The primary structure comprises 460 residues: MSSGRIVQIIGAVIDVEFPREAVPKVYDALSVDGTETTLEVQQQLGDGVVRTIAMGSTEGLKRGLGVTDNGEPIQVPVGTKTLGRIMDVLGRPIDEAGPIGEEERMPIHRAAPTYADQAATNELLETGIKVIDLVCPFAKGGKVGLFGGAGVGKTVNMMELIRNIAIEHSGFSVFAGVGERTREGNDFYHEMKDSNVLDKVSLVYGQMNEPPGNRLRVALTGLTMAEKFRDEGRDVLFFVDNIYRYTLAGTEVSALLGRMPSAVGYQPTLAEEMGVLQERITSTKTGSITSVQAVYVPADDLTDPSPATTFAHLDSTVSLSRDIASKGIYPAIDPLDSTSRQLDPLVIGQEHYDIARGVQTVLQRFKELKDIIAILGMDELSEDDKLIVSRARKIERYLSQPFFVAEVFTGSPGKYVSLKDTLAGFKGILGGDYDHIPEQDFYMKGSIDEVIEAYNKRSK.

148–155 (GGAGVGKT) lines the ATP pocket.

Belongs to the ATPase alpha/beta chains family. In terms of assembly, F-type ATPases have 2 components, CF(1) - the catalytic core - and CF(0) - the membrane proton channel. CF(1) has five subunits: alpha(3), beta(3), gamma(1), delta(1), epsilon(1). CF(0) has three main subunits: a(1), b(2) and c(9-12). The alpha and beta chains form an alternating ring which encloses part of the gamma chain. CF(1) is attached to CF(0) by a central stalk formed by the gamma and epsilon chains, while a peripheral stalk is formed by the delta and b chains.

The protein localises to the cell inner membrane. The enzyme catalyses ATP + H2O + 4 H(+)(in) = ADP + phosphate + 5 H(+)(out). Functionally, produces ATP from ADP in the presence of a proton gradient across the membrane. The catalytic sites are hosted primarily by the beta subunits. This Alcanivorax borkumensis (strain ATCC 700651 / DSM 11573 / NCIMB 13689 / SK2) protein is ATP synthase subunit beta.